The following is a 355-amino-acid chain: UDP-3-O-acylglucosamine N-acyltransferase (355 aa).

Residue His258 is the Proton acceptor of the active site.

The protein belongs to the transferase hexapeptide repeat family. LpxD subfamily. Homotrimer.

The enzyme catalyses a UDP-3-O-[(3R)-3-hydroxyacyl]-alpha-D-glucosamine + a (3R)-hydroxyacyl-[ACP] = a UDP-2-N,3-O-bis[(3R)-3-hydroxyacyl]-alpha-D-glucosamine + holo-[ACP] + H(+). The protein operates within bacterial outer membrane biogenesis; LPS lipid A biosynthesis. Its function is as follows. Catalyzes the N-acylation of UDP-3-O-acylglucosamine using 3-hydroxyacyl-ACP as the acyl donor. Is involved in the biosynthesis of lipid A, a phosphorylated glycolipid that anchors the lipopolysaccharide to the outer membrane of the cell. The polypeptide is UDP-3-O-acylglucosamine N-acyltransferase (Bradyrhizobium sp. (strain BTAi1 / ATCC BAA-1182)).